Consider the following 131-residue polypeptide: uncharacterized protein (131 aa).

In terms of domain architecture, CMP/dCMP-type deaminase spans 1 to 116 (MYMARMLSEM…EMLEASSIQC (116 aa)).

This is an uncharacterized protein from Caenorhabditis elegans.